The chain runs to 251 residues: Ubiquinone/menaquinone biosynthesis C-methyltransferase UbiE (251 aa).

Residues T74, D95, and 123–124 each bind S-adenosyl-L-methionine; that span reads NA.

The protein belongs to the class I-like SAM-binding methyltransferase superfamily. MenG/UbiE family.

It carries out the reaction a 2-demethylmenaquinol + S-adenosyl-L-methionine = a menaquinol + S-adenosyl-L-homocysteine + H(+). The catalysed reaction is a 2-methoxy-6-(all-trans-polyprenyl)benzene-1,4-diol + S-adenosyl-L-methionine = a 5-methoxy-2-methyl-3-(all-trans-polyprenyl)benzene-1,4-diol + S-adenosyl-L-homocysteine + H(+). It participates in quinol/quinone metabolism; menaquinone biosynthesis; menaquinol from 1,4-dihydroxy-2-naphthoate: step 2/2. The protein operates within cofactor biosynthesis; ubiquinone biosynthesis. Its function is as follows. Methyltransferase required for the conversion of demethylmenaquinol (DMKH2) to menaquinol (MKH2) and the conversion of 2-polyprenyl-6-methoxy-1,4-benzoquinol (DDMQH2) to 2-polyprenyl-3-methyl-6-methoxy-1,4-benzoquinol (DMQH2). This is Ubiquinone/menaquinone biosynthesis C-methyltransferase UbiE from Pseudoalteromonas translucida (strain TAC 125).